A 188-amino-acid chain; its full sequence is 3-hydroxyanthranilate 3,4-dioxygenase 2 (188 aa).

Arg-46 serves as a coordination point for O2. Fe cation-binding residues include His-50, Glu-70, and His-108. Glu-70 is a substrate binding site. Positions 112 and 122 each coordinate substrate.

Belongs to the 3-HAO family. Fe(2+) is required as a cofactor.

It localises to the cytoplasm. The enzyme catalyses 3-hydroxyanthranilate + O2 = (2Z,4Z)-2-amino-3-carboxymuconate 6-semialdehyde. It participates in cofactor biosynthesis; NAD(+) biosynthesis; quinolinate from L-kynurenine: step 3/3. Functionally, catalyzes the oxidative ring opening of 3-hydroxyanthranilate to 2-amino-3-carboxymuconate semialdehyde, which spontaneously cyclizes to quinolinate. In Aspergillus fumigatus (strain CBS 144.89 / FGSC A1163 / CEA10) (Neosartorya fumigata), this protein is 3-hydroxyanthranilate 3,4-dioxygenase 2 (bna1-2).